The sequence spans 289 residues: Phospholipase C (289 aa).

Residues 1 to 25 (MKFKKVVLGMCLIASVLVFPVTIKA) form the signal peptide. The propeptide occupies 26–51 (NACCDEYLQTPAAPHDIDSKLPHKLS). Zn(2+) is bound by residues Trp52, His65, Asp106, His120, His169, Asp173, His179, His193, and Glu197. Residues 52-289 (WSADNPTNTD…LEFWSKKTNE (238 aa)) enclose the Zn-dependent PLC domain.

The protein belongs to the bacterial zinc-metallophospholipase C family. In terms of assembly, forms monomers, dimers and higher order oligomers, but only the monomer is enzymatically active. Zn(2+) serves as cofactor.

It localises to the secreted. The enzyme catalyses a 1,2-diacyl-sn-glycero-3-phosphocholine + H2O = phosphocholine + a 1,2-diacyl-sn-glycerol + H(+). It carries out the reaction 1,2-dihexadecanoyl-sn-glycero-3-phosphocholine + H2O = 1,2-dihexadecanoyl-sn-glycerol + phosphocholine + H(+). It catalyses the reaction 1-hexadecanoyl-2-(9Z-octadecenoyl)-sn-glycero-3-phosphocholine + H2O = 1-hexadecanoyl-2-(9Z-octadecenoyl)-sn-glycerol + phosphocholine + H(+). The catalysed reaction is 1,2-di-(9Z-octadecenoyl)-sn-glycero-3-phosphocholine + H2O = 1,2-di-(9Z-octadecenoyl)-sn-glycerol + phosphocholine + H(+). The enzyme catalyses a 1,2-diacyl-sn-glycero-3-phosphoethanolamine + H2O = phosphoethanolamine + a 1,2-diacyl-sn-glycerol + H(+). It carries out the reaction 1,2-di-(9Z-octadecenoyl)-sn-glycero-3-phosphoethanolamine + H2O = phosphoethanolamine + 1,2-di-(9Z-octadecenoyl)-sn-glycerol + H(+). It catalyses the reaction 1,2-dihexadecanoyl-sn-glycero-3-phosphoethanolamine + H2O = 1,2-dihexadecanoyl-sn-glycerol + phosphoethanolamine + H(+). The catalysed reaction is a 1,2-diacyl-sn-glycero-3-phospho-L-serine + H2O = O-phospho-L-serine + a 1,2-diacyl-sn-glycerol + H(+). The enzyme catalyses a 1,2-diacyl-sn-glycero-3-phosphoglycerol + H2O = glycerol 1-phosphate + a 1,2-diacyl-sn-glycerol + H(+). It carries out the reaction a 1,2-diacyl-sn-glycero-3-phospho-(1D-myo-inositol) + H2O = 1D-myo-inositol 1-phosphate + a 1,2-diacyl-sn-glycerol + H(+). It catalyses the reaction a sphingomyelin + H2O = phosphocholine + an N-acylsphing-4-enine + H(+). The catalysed reaction is a 1-O-(1Z-alkenyl)-2-acyl-sn-glycero-3-phosphoethanolamine + H2O = a 1-O-(1Z-alkenyl)-2-acyl-sn-glycerol + phosphoethanolamine + H(+). Its activity is regulated as follows. Enzymatic activity of LmPC-PLC can be specifically inhibited by its propeptide added in trans. The tendency of the enzyme to oligomerize, which appears to largely attenuate the enzymatic activity, may be one of the mechanisms regulating phospholipase activity in the host cell during the different steps of the infection cycle of L.monocytogenes. Enzyme activity is inhibited by EDTA and o-phenanthroline in vitro. Major virulence factor whose phospholipase activity facilitates pore formation by the pore-forming toxin listeriolysin O (LLO), leading to vacuolar membrane disruption and vacuolar escape of L.monocytogenes, which enables the bacterium to spread in the host. Acts as a phospholipase C exhibiting broad substrate specificity, with the highest activities towards diacylglycerophospholipids with phosphocholine, phosphoserine, and phosphoethanolamine head groups, but less towards phosphoglycerol or phosphoinositol head groups. Is also able to hydrolyze sphingomyelin and plasmenylethanolamine. This Listeria monocytogenes serovar 1/2a (strain ATCC BAA-679 / EGD-e) protein is Phospholipase C.